Reading from the N-terminus, the 288-residue chain is Acetyl-coenzyme A carboxylase carboxyl transferase subunit beta (288 aa).

A CoA carboxyltransferase N-terminal domain is found at 34 to 288 (LFAKCPACKH…HLVAFHGGVS (255 aa)). Zn(2+) contacts are provided by C38, C41, C56, and C59. The C4-type zinc finger occupies 38-59 (CPACKHMIYQKDLGPAKICPTC).

This sequence belongs to the AccD/PCCB family. In terms of assembly, acetyl-CoA carboxylase is a heterohexamer composed of biotin carboxyl carrier protein (AccB), biotin carboxylase (AccC) and two subunits each of ACCase subunit alpha (AccA) and ACCase subunit beta (AccD). Zn(2+) is required as a cofactor.

It localises to the cytoplasm. The catalysed reaction is N(6)-carboxybiotinyl-L-lysyl-[protein] + acetyl-CoA = N(6)-biotinyl-L-lysyl-[protein] + malonyl-CoA. The protein operates within lipid metabolism; malonyl-CoA biosynthesis; malonyl-CoA from acetyl-CoA: step 1/1. Its function is as follows. Component of the acetyl coenzyme A carboxylase (ACC) complex. Biotin carboxylase (BC) catalyzes the carboxylation of biotin on its carrier protein (BCCP) and then the CO(2) group is transferred by the transcarboxylase to acetyl-CoA to form malonyl-CoA. In Streptococcus equi subsp. equi (strain 4047), this protein is Acetyl-coenzyme A carboxylase carboxyl transferase subunit beta.